Reading from the N-terminus, the 258-residue chain is 14-3-3 protein homolog (258 aa).

The protein belongs to the 14-3-3 family.

The chain is 14-3-3 protein homolog from Encephalitozoon cuniculi (strain GB-M1) (Microsporidian parasite).